The primary structure comprises 326 residues: Ribosome biogenesis protein BRX1 homolog (326 aa).

Over residues 1-17 (MVKPSKILEKIKKRTEP) the composition is skewed to basic and acidic residues. The disordered stretch occupies residues 1-66 (MVKPSKILEK…EENKNIEENK (66 aa)). Residues 22–57 (VVEEESDEEIIEQEGSEEEEEIVEEESEEEEEEVEE) are compositionally biased toward acidic residues. The 194-residue stretch at 75-268 (KRVLFTSTRG…IDKIFSDGFG (194 aa)) folds into the Brix domain.

It belongs to the BRX1 family.

Its subcellular location is the nucleus. The protein resides in the nucleolus. Its function is as follows. Required for biogenesis of the 60S ribosomal subunit. The polypeptide is Ribosome biogenesis protein BRX1 homolog (bxdc2) (Dictyostelium discoideum (Social amoeba)).